Reading from the N-terminus, the 121-residue chain is Large-conductance mechanosensitive channel (121 aa).

Transmembrane regions (helical) follow at residues 14 to 34 (VLDL…VKSL) and 67 to 87 (GAFL…FVLI).

Belongs to the MscL family. As to quaternary structure, homopentamer.

It is found in the cell membrane. Its function is as follows. Channel that opens in response to stretch forces in the membrane lipid bilayer. May participate in the regulation of osmotic pressure changes within the cell. The chain is Large-conductance mechanosensitive channel from Lactococcus lactis subsp. cremoris (strain SK11).